Consider the following 140-residue polypeptide: CBS domain-containing protein YhcV (140 aa).

2 consecutive CBS domains span residues 8–64 and 72–127; these read MTTQ…GRDG and MSTE…NESA.

In Bacillus subtilis (strain 168), this protein is CBS domain-containing protein YhcV (yhcV).